The sequence spans 520 residues: Serine protease Hip1 (520 aa).

A signal peptide spans 1–30 (MGMRLSRRDKIARMLLIWAALAAVALVLVG). A lipid anchor (N-palmitoyl cysteine) is attached at Cys-31. Cys-31 carries S-diacylglycerol cysteine lipidation. The AB hydrolase-1 domain occupies 102 to 497 (GSLVINPGGP…TQHTVVFQGD (396 aa)). Ser-228 acts as the Nucleophile in catalysis. Asp-463 is an active-site residue. The active-site Proton donor is the His-490.

Belongs to the peptidase S33 family.

The protein localises to the cell envelope. The protein resides in the cell membrane. Serine protease that promotes pathogenesis by promoting the processing and the extracellular release of the M.bovis heat-shock protein GroEL2. In terms of biological role, key immunomodulatory virulence factor, which promotes survival in host macrophages and modulates host immune responses. The sequence is that of Serine protease Hip1 from Mycobacterium bovis (strain ATCC BAA-935 / AF2122/97).